Here is a 233-residue protein sequence, read N- to C-terminus: Cilia- and flagella-associated protein 299 (233 aa).

It localises to the cytoplasm. It is found in the nucleus. Functionally, may be involved in spermatogenesis. In Homo sapiens (Human), this protein is Cilia- and flagella-associated protein 299.